A 122-amino-acid chain; its full sequence is MKRAYRLRTPEQYQRVRRDGRTWDAGMLMLNAAPNRRRISRCGFIVAKRLGGAVVRNRIRRRVREAVRLLYPQIAPGWDMVFIARSPALAEIAFPQLQALVQRLLQRAGVVQGAVSETPDKD.

The protein belongs to the RnpA family. As to quaternary structure, consists of a catalytic RNA component (M1 or rnpB) and a protein subunit.

The enzyme catalyses Endonucleolytic cleavage of RNA, removing 5'-extranucleotides from tRNA precursor.. Its function is as follows. RNaseP catalyzes the removal of the 5'-leader sequence from pre-tRNA to produce the mature 5'-terminus. It can also cleave other RNA substrates such as 4.5S RNA. The protein component plays an auxiliary but essential role in vivo by binding to the 5'-leader sequence and broadening the substrate specificity of the ribozyme. This is Ribonuclease P protein component from Roseiflexus castenholzii (strain DSM 13941 / HLO8).